Reading from the N-terminus, the 544-residue chain is CTP synthase (544 aa).

The interval 1–265 (MARFIFITGG…DEAVLSAFGI (265 aa)) is amidoligase domain. Position 13 (Ser13) interacts with CTP. Ser13 lines the UTP pocket. 14–19 (SLGKGL) lines the ATP pocket. Residue Tyr54 coordinates L-glutamine. Asp71 is an ATP binding site. Mg(2+) is bound by residues Asp71 and Glu139. Residues 146-148 (DIE), 186-191 (KTKPTQ), and Lys222 each bind CTP. Residues 186 to 191 (KTKPTQ) and Lys222 contribute to the UTP site. A Glutamine amidotransferase type-1 domain is found at 291-543 (TIGVVGKYVG…IAAALQQSRL (253 aa)). Gly355 lines the L-glutamine pocket. Cys382 functions as the Nucleophile; for glutamine hydrolysis in the catalytic mechanism. L-glutamine contacts are provided by residues 383 to 386 (LGMQ), Glu406, and Arg471. Active-site residues include His516 and Glu518.

This sequence belongs to the CTP synthase family. Homotetramer.

The catalysed reaction is UTP + L-glutamine + ATP + H2O = CTP + L-glutamate + ADP + phosphate + 2 H(+). It catalyses the reaction L-glutamine + H2O = L-glutamate + NH4(+). It carries out the reaction UTP + NH4(+) + ATP = CTP + ADP + phosphate + 2 H(+). It functions in the pathway pyrimidine metabolism; CTP biosynthesis via de novo pathway; CTP from UDP: step 2/2. With respect to regulation, allosterically activated by GTP, when glutamine is the substrate; GTP has no effect on the reaction when ammonia is the substrate. The allosteric effector GTP functions by stabilizing the protein conformation that binds the tetrahedral intermediate(s) formed during glutamine hydrolysis. Inhibited by the product CTP, via allosteric rather than competitive inhibition. Catalyzes the ATP-dependent amination of UTP to CTP with either L-glutamine or ammonia as the source of nitrogen. Regulates intracellular CTP levels through interactions with the four ribonucleotide triphosphates. This Rhizorhabdus wittichii (strain DSM 6014 / CCUG 31198 / JCM 15750 / NBRC 105917 / EY 4224 / RW1) (Sphingomonas wittichii) protein is CTP synthase.